A 640-amino-acid chain; its full sequence is Biosynthetic arginine decarboxylase (640 aa).

N6-(pyridoxal phosphate)lysine is present on Lys105. 290-300 (FDVGGGLAIDY) is a substrate binding site.

The protein belongs to the Orn/Lys/Arg decarboxylase class-II family. SpeA subfamily. Mg(2+) is required as a cofactor. It depends on pyridoxal 5'-phosphate as a cofactor.

It catalyses the reaction L-arginine + H(+) = agmatine + CO2. Its function is as follows. Catalyzes the biosynthesis of agmatine from arginine. This Vibrio vulnificus (strain CMCP6) protein is Biosynthetic arginine decarboxylase.